Consider the following 349-residue polypeptide: Green-sensitive opsin-2 (349 aa).

The Extracellular segment spans residues 1–36 (MNGTEGNNFYIPMSNRTGLVRSPYEYTQYYLADPWQ). Residues asparagine 2 and asparagine 15 are each glycosylated (N-linked (GlcNAc...) asparagine). Residues 37–61 (FKALAFYMFFLICFGLPINVLTLLV) traverse the membrane as a helical segment. Residues 62-73 (TAQHKKLRQPLN) lie on the Cytoplasmic side of the membrane. Residues 74-99 (YILVNLAFAGTIMAFFGFTVTFYCSI) traverse the membrane as a helical segment. Topologically, residues 100 to 113 (NGYMALGPTGCAIE) are extracellular. The cysteines at positions 110 and 187 are disulfide-linked. Residues 114-133 (GFFATLGGQVALWSLVVLAI) form a helical membrane-spanning segment. The Cytoplasmic segment spans residues 134–152 (ERYIVVCKPMGSFKFSSNH). Residues 153 to 176 (AMAGIAFTWVMASSCAVPPLFGWS) traverse the membrane as a helical segment. Topologically, residues 177–202 (RYIPEGMQTSCGPDYYTLNPEFNNES) are extracellular. Residue asparagine 200 is glycosylated (N-linked (GlcNAc...) asparagine). A helical membrane pass occupies residues 203-230 (YVLYMFSCHFCVPVTTIFFTYGSLVCTV). The Cytoplasmic portion of the chain corresponds to 231–252 (KAAAAQQQESESTQKAEREVTR). Residues 253–276 (MVILMVLGFLVAWVPYASFAAWIF) traverse the membrane as a helical segment. At 277 to 284 (FNRGAAFS) the chain is on the extracellular side. A helical transmembrane segment spans residues 285 to 309 (AQAMAIPAFFSKASALFNPIIYVLL). Lysine 296 carries the post-translational modification N6-(retinylidene)lysine. Residues 310–349 (NKQFRSCMLNTLFCGKSPLGDDESSSVSTSKTEVSSVSPA) are Cytoplasmic-facing. Positions 328–349 (LGDDESSSVSTSKTEVSSVSPA) are disordered. Residues 334-349 (SSVSTSKTEVSSVSPA) are compositionally biased toward low complexity.

This sequence belongs to the G-protein coupled receptor 1 family. Opsin subfamily. Post-translationally, phosphorylated on some or all of the serine and threonine residues present in the C-terminal region.

It localises to the membrane. Functionally, visual pigments are the light-absorbing molecules that mediate vision. They consist of an apoprotein, opsin, covalently linked to cis-retinal. This Danio rerio (Zebrafish) protein is Green-sensitive opsin-2 (opn1mw2).